A 168-amino-acid chain; its full sequence is Prespore-specific protein A (168 aa).

A signal peptide spans 1 to 19 (MKFQHTFIALLSLLTYANA). O-linked (GlcNAc) threonine glycosylation is found at T110, T114, T116, T118, T120, T122, T124, T126, T128, T130, T132, T134, and T138. Repeat copies occupy residues 116–119 (TPTV), 120–123 (TPTV), and 124–127 (TPTV). Positions 116 to 127 (TPTVTPTVTPTV) are 3 X 4 AA tandem repeats of T-P-T-V. Positions 116–131 (TPTVTPTVTPTVTPTP) are enriched in low complexity. The tract at residues 116 to 147 (TPTVTPTVTPTVTPTPTNTPNPTPSQTSTTTG) is disordered. A glycan (O-linked (GlcNAc) serine) is linked at S140. G147 carries the GPI-like-anchor amidated glycine lipid modification. A propeptide spans 148–168 (SASTVVASLSLIIFSMILSLC) (removed in mature form).

Belongs to the ponticulin family. In terms of processing, O-glycosylated in the repeat region. The oligosaccharides contain N-acetylglucosamine and fucose as the major constituents. The GPI-like-anchor contains a phosphoceramide group, rather than a phosphatidyl group.

Its subcellular location is the cell membrane. May bind F-actin and nucleates actin assembly. In Dictyostelium discoideum (Social amoeba), this protein is Prespore-specific protein A (pspA).